The primary structure comprises 364 residues: Carbamoyl phosphate synthase small chain (364 aa).

CPSase stretches follow at residues 1-167 (MKRQ…PSPG) and 1-171 (MKRQ…RGER). Residues S45, G219, and G221 each coordinate L-glutamine. One can recognise a Glutamine amidotransferase type-1 domain in the interval 171 to 358 (RIVLIDFGMK…LALIREFNKK (188 aa)). C246 acts as the Nucleophile in catalysis. L-glutamine is bound by residues L247, Q250, N288, G290, and Y291. Residues H331 and E333 contribute to the active site.

This sequence belongs to the CarA family. As to quaternary structure, composed of two chains; the small (or glutamine) chain promotes the hydrolysis of glutamine to ammonia, which is used by the large (or ammonia) chain to synthesize carbamoyl phosphate. Tetramer of heterodimers (alpha,beta)4.

It carries out the reaction hydrogencarbonate + L-glutamine + 2 ATP + H2O = carbamoyl phosphate + L-glutamate + 2 ADP + phosphate + 2 H(+). The catalysed reaction is L-glutamine + H2O = L-glutamate + NH4(+). It participates in amino-acid biosynthesis; L-arginine biosynthesis; carbamoyl phosphate from bicarbonate: step 1/1. It functions in the pathway pyrimidine metabolism; UMP biosynthesis via de novo pathway; (S)-dihydroorotate from bicarbonate: step 1/3. Small subunit of the glutamine-dependent carbamoyl phosphate synthetase (CPSase). CPSase catalyzes the formation of carbamoyl phosphate from the ammonia moiety of glutamine, carbonate, and phosphate donated by ATP, constituting the first step of 2 biosynthetic pathways, one leading to arginine and/or urea and the other to pyrimidine nucleotides. The small subunit (glutamine amidotransferase) binds and cleaves glutamine to supply the large subunit with the substrate ammonia. The polypeptide is Carbamoyl phosphate synthase small chain (Bacillus caldolyticus).